The chain runs to 141 residues: D-aminoacyl-tRNA deacylase (141 aa).

Residues 133-134 carry the Gly-cisPro motif, important for rejection of L-amino acids motif; the sequence is GP.

This sequence belongs to the DTD family. In terms of assembly, homodimer.

It localises to the cytoplasm. The enzyme catalyses glycyl-tRNA(Ala) + H2O = tRNA(Ala) + glycine + H(+). The catalysed reaction is a D-aminoacyl-tRNA + H2O = a tRNA + a D-alpha-amino acid + H(+). Its function is as follows. An aminoacyl-tRNA editing enzyme that deacylates mischarged D-aminoacyl-tRNAs. Also deacylates mischarged glycyl-tRNA(Ala), protecting cells against glycine mischarging by AlaRS. Acts via tRNA-based rather than protein-based catalysis; rejects L-amino acids rather than detecting D-amino acids in the active site. By recycling D-aminoacyl-tRNA to D-amino acids and free tRNA molecules, this enzyme counteracts the toxicity associated with the formation of D-aminoacyl-tRNA entities in vivo and helps enforce protein L-homochirality. In Streptomyces coelicolor (strain ATCC BAA-471 / A3(2) / M145), this protein is D-aminoacyl-tRNA deacylase.